Reading from the N-terminus, the 428-residue chain is Zinc metalloproteinase nas-27 (428 aa).

Residues Met-1–Ala-17 form the signal peptide. A propeptide spanning residues Ile-18–Arg-57 is cleaved from the precursor. A Peptidase M12A domain is found at Ala-58–His-255. Intrachain disulfides connect Cys-99/Cys-254, Cys-120/Cys-141, Cys-258/Cys-276, Cys-281/Cys-290, Cys-306/Cys-339, and Cys-366/Cys-386. Zn(2+) is bound at residue His-150. The active site involves Glu-151. Positions 154 and 160 each coordinate Zn(2+). A glycan (N-linked (GlcNAc...) asparagine) is linked at Asn-181. The region spanning Val-250–Glu-291 is the EGF-like domain. One can recognise a CUB domain in the interval Cys-306–Val-428. The N-linked (GlcNAc...) asparagine glycan is linked to Asn-377.

Zn(2+) is required as a cofactor.

It localises to the secreted. Its function is as follows. Metalloprotease. The polypeptide is Zinc metalloproteinase nas-27 (nas-27) (Caenorhabditis elegans).